The sequence spans 420 residues: Gamma-glutamyl phosphate reductase (420 aa).

This sequence belongs to the gamma-glutamyl phosphate reductase family.

The protein resides in the cytoplasm. The catalysed reaction is L-glutamate 5-semialdehyde + phosphate + NADP(+) = L-glutamyl 5-phosphate + NADPH + H(+). It functions in the pathway amino-acid biosynthesis; L-proline biosynthesis; L-glutamate 5-semialdehyde from L-glutamate: step 2/2. Its function is as follows. Catalyzes the NADPH-dependent reduction of L-glutamate 5-phosphate into L-glutamate 5-semialdehyde and phosphate. The product spontaneously undergoes cyclization to form 1-pyrroline-5-carboxylate. The sequence is that of Gamma-glutamyl phosphate reductase from Chlorobium luteolum (strain DSM 273 / BCRC 81028 / 2530) (Pelodictyon luteolum).